The chain runs to 465 residues: CCA-adding enzyme (465 aa).

Ser63 and Lys66 together coordinate ATP. Residues Ser63 and Lys66 each contribute to the CTP site. Residues Glu75, Asp77, and Asp127 each contribute to the Mg(2+) site. Positions 149, 171, and 180 each coordinate ATP. His149, Lys171, and Tyr180 together coordinate CTP.

The protein belongs to the tRNA nucleotidyltransferase/poly(A) polymerase family. Archaeal CCA-adding enzyme subfamily. As to quaternary structure, homodimer. Mg(2+) serves as cofactor.

It catalyses the reaction a tRNA precursor + 2 CTP + ATP = a tRNA with a 3' CCA end + 3 diphosphate. It carries out the reaction a tRNA with a 3' CCA end + 2 CTP + ATP = a tRNA with a 3' CCACCA end + 3 diphosphate. In terms of biological role, catalyzes the addition and repair of the essential 3'-terminal CCA sequence in tRNAs without using a nucleic acid template. Adds these three nucleotides in the order of C, C, and A to the tRNA nucleotide-73, using CTP and ATP as substrates and producing inorganic pyrophosphate. tRNA 3'-terminal CCA addition is required both for tRNA processing and repair. Also involved in tRNA surveillance by mediating tandem CCA addition to generate a CCACCA at the 3' terminus of unstable tRNAs. While stable tRNAs receive only 3'-terminal CCA, unstable tRNAs are marked with CCACCA and rapidly degraded. The sequence is that of CCA-adding enzyme from Aeropyrum pernix (strain ATCC 700893 / DSM 11879 / JCM 9820 / NBRC 100138 / K1).